We begin with the raw amino-acid sequence, 319 residues long: Ubiquinone biosynthesis protein COQ9, mitochondrial (319 aa).

The transit peptide at 1-45 directs the protein to the mitochondrion; it reads MAATVAFSGVLRRAGWRLLQLRCLPVPRCRPALAPRAFRASAMQL. An SIFI-degron motif is present at residues 17-32; that stretch reads RLLQLRCLPVPRCRPA. The disordered stretch occupies residues 46 to 99; sequence RSLDQQKDQPPPSSSQQQSEAQGAEEPNPEALRSPPRYTDQGGEEEEDYESEEQ. Acidic residues predominate over residues 87–98; sequence GGEEEEDYESEE. The residue at position 176 (K176) is an N6-acetyllysine. R245 lines the a 1,2-diacylglycero-3-phosphoethanolamine pocket.

It belongs to the COQ9 family. In terms of assembly, homodimer. Heterodimer; two heterodimers of COQ7:COQ9 come together on the same side of the lipid pseudo-bilayer and form a curved tetramer with a hydrophobic surface suitable for membrane interaction. These two tetramers assemble into a soluble octamer with a pseudo-bilayer of lipids captured within. Interacts with COQ7; this interaction allows ubiquinone (CoQ) isoprene intermediates presentation to COQ7 and facilitates the COQ7-mediated hydroxylase step. In terms of processing, in response to mitochondrial stress, the precursor protein is ubiquitinated by the SIFI complex in the cytoplasm before mitochondrial import, leading to its degradation. Within the SIFI complex, UBR4 initiates ubiquitin chain that are further elongated or branched by KCMF1.

Its subcellular location is the mitochondrion. Its pathway is cofactor biosynthesis; ubiquinone biosynthesis. In terms of biological role, membrane-associated protein that warps the membrane surface to access and bind aromatic isoprenes with high specificity, including ubiquinone (CoQ) isoprene intermediates and presents them directly to COQ7, therefore facilitating the COQ7-mediated hydroxylase step. Participates in the biosynthesis of coenzyme Q, also named ubiquinone, an essential lipid-soluble electron transporter for aerobic cellular respiration. This is Ubiquinone biosynthesis protein COQ9, mitochondrial from Bos taurus (Bovine).